Reading from the N-terminus, the 505-residue chain is Kinesin light chain 3 (505 aa).

The tract at residues 1 to 20 (MSVQVAAPGGLGLGLERPSP) is disordered. Residues 88–150 (LLALSAHVGA…EEEKSHLEFL (63 aa)) adopt a coiled-coil conformation. The segment at 157–193 (DPPAESQQPESPPRRDSLASLFPSEEEERRGPEAVGA) is disordered. Residue S173 is modified to Phosphoserine. TPR repeat units follow at residues 207-240 (LRTLHNLVIQYAGQGRYEVAVPLCRQALEDLERS), 249-282 (ATMLNILALVYRDQNKYKEATDLLHDALQIREQT), 291-324 (AATLNNLAVLYGKRGRYREAEPLCQRALEIREKV), 333-366 (AKQLNNLALLCQNQGKFEEVERHYARALSIYEAL), and 375-408 (AKTKNNLASAYLKQNKYQQAEELYKEILHREALP). The disordered stretch occupies residues 409 to 505 (APLGAPNTGT…STSTQDLGPR (97 aa)). The segment covering 416-434 (TGTTSDTQQQTLSRSSSFS) has biased composition (low complexity). Residues 435 to 453 (KLRESIRRGSEKLVSRLRG) are compositionally biased toward basic and acidic residues. Position 467 is a phosphoserine (S467). A compositionally biased stretch (polar residues) spans 489–505 (SEASRTLSTSTQDLGPR). A Phosphothreonine modification is found at T499.

The protein belongs to the kinesin light chain family. As to quaternary structure, oligomer composed of two heavy chains and two light chains. Associates with microtubulin in an ATP-dependent manner. Interacts with KIF5C. Interacts with ODF1. Interacts with LRGUK. Interacts with VDAC2.

Its subcellular location is the cytoplasm. It localises to the cytoskeleton. The protein localises to the mitochondrion. In terms of biological role, kinesin is a microtubule-associated force-producing protein that may play a role in organelle transport. Plays a role during spermiogenesis in the development of the sperm tail midpiece and in the normal function of spermatozoa. May play a role in the formation of the mitochondrial sheath formation in the developing spermatid midpiece. This chain is Kinesin light chain 3 (KLC3), found in Bos taurus (Bovine).